The chain runs to 461 residues: Glycine--tRNA ligase (461 aa).

Substrate is bound by residues Arg99 and Glu173. ATP contacts are provided by residues 205-207 (RNE), 215-220 (FRTREF), 289-290 (EL), and 333-336 (GADR). 220 to 224 (FEQME) serves as a coordination point for substrate. A substrate-binding site is contributed by 329 to 333 (EPSLG).

It belongs to the class-II aminoacyl-tRNA synthetase family. As to quaternary structure, homodimer.

It is found in the cytoplasm. The catalysed reaction is tRNA(Gly) + glycine + ATP = glycyl-tRNA(Gly) + AMP + diphosphate. In terms of biological role, catalyzes the attachment of glycine to tRNA(Gly). In Lysinibacillus sphaericus (strain C3-41), this protein is Glycine--tRNA ligase.